Here is a 490-residue protein sequence, read N- to C-terminus: Glutamate--tRNA ligase 1 (490 aa).

Positions 27–37 (PSPTGYLHIGG) match the 'HIGH' region motif. A 'KMSKS' region motif is present at residues 254 to 258 (KLSKR). An ATP-binding site is contributed by Lys-257.

Belongs to the class-I aminoacyl-tRNA synthetase family. Glutamate--tRNA ligase type 1 subfamily. As to quaternary structure, monomer.

It localises to the cytoplasm. The enzyme catalyses tRNA(Glu) + L-glutamate + ATP = L-glutamyl-tRNA(Glu) + AMP + diphosphate. Catalyzes the attachment of glutamate to tRNA(Glu) in a two-step reaction: glutamate is first activated by ATP to form Glu-AMP and then transferred to the acceptor end of tRNA(Glu). The protein is Glutamate--tRNA ligase 1 of Sphingopyxis alaskensis (strain DSM 13593 / LMG 18877 / RB2256) (Sphingomonas alaskensis).